A 464-amino-acid chain; its full sequence is ATP synthase subunit beta (464 aa).

Position 153-160 (153-160 (GGAGVGKT)) interacts with ATP.

This sequence belongs to the ATPase alpha/beta chains family. F-type ATPases have 2 components, CF(1) - the catalytic core - and CF(0) - the membrane proton channel. CF(1) has five subunits: alpha(3), beta(3), gamma(1), delta(1), epsilon(1). CF(0) has three main subunits: a(1), b(2) and c(9-12). The alpha and beta chains form an alternating ring which encloses part of the gamma chain. CF(1) is attached to CF(0) by a central stalk formed by the gamma and epsilon chains, while a peripheral stalk is formed by the delta and b chains.

The protein localises to the cell inner membrane. The catalysed reaction is ATP + H2O + 4 H(+)(in) = ADP + phosphate + 5 H(+)(out). Functionally, produces ATP from ADP in the presence of a proton gradient across the membrane. The catalytic sites are hosted primarily by the beta subunits. The protein is ATP synthase subunit beta of Burkholderia ambifaria (strain MC40-6).